Consider the following 189-residue polypeptide: Protein GrpE (189 aa).

Over residues 1–12 (MDKKKHGSHAGA) the composition is skewed to basic residues. Positions 1-36 (MDKKKHGSHAGAHHTDEPAAETVAPAAEGAPAAADR) are disordered. The segment covering 20–34 (AETVAPAAEGAPAAA) has biased composition (low complexity).

This sequence belongs to the GrpE family. As to quaternary structure, homodimer.

It is found in the cytoplasm. Its function is as follows. Participates actively in the response to hyperosmotic and heat shock by preventing the aggregation of stress-denatured proteins, in association with DnaK and GrpE. It is the nucleotide exchange factor for DnaK and may function as a thermosensor. Unfolded proteins bind initially to DnaJ; upon interaction with the DnaJ-bound protein, DnaK hydrolyzes its bound ATP, resulting in the formation of a stable complex. GrpE releases ADP from DnaK; ATP binding to DnaK triggers the release of the substrate protein, thus completing the reaction cycle. Several rounds of ATP-dependent interactions between DnaJ, DnaK and GrpE are required for fully efficient folding. The polypeptide is Protein GrpE (Geobacter metallireducens (strain ATCC 53774 / DSM 7210 / GS-15)).